The sequence spans 239 residues: Small ribosomal subunit protein uS2 (239 aa).

Belongs to the universal ribosomal protein uS2 family.

The protein is Small ribosomal subunit protein uS2 of Francisella tularensis subsp. tularensis (strain WY96-3418).